The chain runs to 196 residues: Phosphatidyl-N-methylethanolamine N-methyltransferase (196 aa).

Residue Met-1 is a topological domain, lumenal. The helical intramembrane region spans 2 to 28; the sequence is AIFEINNSFLICAVSIALNPLLWNIAA. At 29-40 the chain is on the lumenal side; sequence RSEYNHKTLTKL. Residues 41–62 traverse the membrane as a helical segment; that stretch reads ANGDSKKACYMLAACIFVAGIV. Residues 63–89 lie on the Cytoplasmic side of the membrane; the sequence is RDLIYQNALKQQPTLGIFMNPLVQGIA. A helical transmembrane segment spans residues 90-110; the sequence is KLIFCFGSVLVLSSMYKLGLV. S-adenosyl-L-methionine is bound at residue 94–96; sequence CFG. The Lumenal portion of the chain corresponds to 111–153; sequence GTYLGDYFGFLLPERVSGFPFNVNDNPMYNGSTLCFLSTALRY. Residues 154 to 174 form a helical membrane-spanning segment; that stretch reads GKVAGLLLTLEVFFVYRIALK. Over 175 to 196 the chain is Cytoplasmic; it reads FEEPFTAKIYAARDSKQAKKSE. 176–177 serves as a coordination point for S-adenosyl-L-methionine; that stretch reads EE.

This sequence belongs to the class VI-like SAM-binding methyltransferase superfamily. PEMT/PEM2 methyltransferase family.

It localises to the endoplasmic reticulum membrane. It is found in the mitochondrion membrane. It catalyses the reaction a 1,2-diacyl-sn-glycero-3-phospho-N-methylethanolamine + S-adenosyl-L-methionine = a 1,2-diacyl-sn-glycero-3-phospho-N,N-dimethylethanolamine + S-adenosyl-L-homocysteine + H(+). It carries out the reaction a 1,2-diacyl-sn-glycero-3-phospho-N,N-dimethylethanolamine + S-adenosyl-L-methionine = a 1,2-diacyl-sn-glycero-3-phosphocholine + S-adenosyl-L-homocysteine + H(+). It participates in phospholipid metabolism; phosphatidylcholine biosynthesis. Functionally, catalyzes the second two steps of the methylation pathway of phosphatidylcholine biosynthesis, the SAM-dependent methylation of phosphatidylmonomethylethanolamine (PMME) to phosphatidyldimethylethanolamine (PDME) and of PDME to phosphatidylcholine (PC). The polypeptide is Phosphatidyl-N-methylethanolamine N-methyltransferase (Schizosaccharomyces pombe (strain 972 / ATCC 24843) (Fission yeast)).